The sequence spans 351 residues: Protein-glutamate methylesterase/protein-glutamine glutaminase (351 aa).

Residues 8 to 125 form the Response regulatory domain; sequence TVVVVDDSLT…GEDPFAGLGD (118 aa). Aspartate 59 bears the 4-aspartylphosphate mark. A CheB-type methylesterase domain is found at 151-345; the sequence is PKIGTVVGIG…PAILNLCERR (195 aa). Active-site residues include serine 162, histidine 188, and aspartate 287.

This sequence belongs to the CheB family. In terms of processing, phosphorylated by CheA. Phosphorylation of the N-terminal regulatory domain activates the methylesterase activity.

The protein localises to the cytoplasm. The enzyme catalyses [protein]-L-glutamate 5-O-methyl ester + H2O = L-glutamyl-[protein] + methanol + H(+). It catalyses the reaction L-glutaminyl-[protein] + H2O = L-glutamyl-[protein] + NH4(+). Involved in chemotaxis. Part of a chemotaxis signal transduction system that modulates chemotaxis in response to various stimuli. Catalyzes the demethylation of specific methylglutamate residues introduced into the chemoreceptors (methyl-accepting chemotaxis proteins or MCP) by CheR. Also mediates the irreversible deamidation of specific glutamine residues to glutamic acid. This Gluconobacter oxydans (strain 621H) (Gluconobacter suboxydans) protein is Protein-glutamate methylesterase/protein-glutamine glutaminase.